The primary structure comprises 805 residues: Sucrose synthase (805 aa).

The GT-B glycosyltransferase stretch occupies residues 275 to 752 (MVFNVVILSP…GLQRIEEKYT (478 aa)).

It belongs to the glycosyltransferase 1 family. Plant sucrose synthase subfamily.

It catalyses the reaction an NDP-alpha-D-glucose + D-fructose = a ribonucleoside 5'-diphosphate + sucrose + H(+). Its function is as follows. Sucrose-cleaving enzyme that provides UDP-glucose and fructose for various metabolic pathways. This Medicago sativa (Alfalfa) protein is Sucrose synthase.